A 382-amino-acid chain; its full sequence is MPADVKAAQSSAGDSRPGERDKALDLVLGQIERNFGKGSIMRLGDASRMRVETISTGALTLDLALGGGYPKGRVVEVYGPESSGKTTLTLHAIAEVQKRGGVAAFVDAEHALDPVYAASLGVDIENLLVSQPDTGEMALEIVDQLVRSAAVDIVVVDSVAALTPRAEIEGEMGDLAVGAQARLMSQAMRKITGNIGKSGCTVIFLNQLRLKIGVTYGNPETTTGGNALKFYASVRLDIRRIQTLKRGTEEYGIRAKVKVAKNKVAPPFRIAEFDILFGRGISTLGCVLDLAEETGVVTRKGAWYSYEGDNIGQGRDNTIGWLEQNPEAKDAIEVLVRQKLTEGSEVTANSMRPLAAAARSAAAKPSAKTADTDKKLVADGAA.

Residues 1–20 are disordered; that stretch reads MPADVKAAQSSAGDSRPGER. 79–86 is an ATP binding site; it reads GPESSGKT. Residues 360-369 are compositionally biased toward low complexity; that stretch reads SAAAKPSAKT. The disordered stretch occupies residues 360–382; that stretch reads SAAAKPSAKTADTDKKLVADGAA. Residues 370-382 are compositionally biased toward basic and acidic residues; sequence ADTDKKLVADGAA.

The protein belongs to the RecA family.

It localises to the cytoplasm. Can catalyze the hydrolysis of ATP in the presence of single-stranded DNA, the ATP-dependent uptake of single-stranded DNA by duplex DNA, and the ATP-dependent hybridization of homologous single-stranded DNAs. It interacts with LexA causing its activation and leading to its autocatalytic cleavage. The protein is Protein RecA of Synechococcus sp. (strain CC9311).